The primary structure comprises 306 residues: Transcription factor MYBS1 (306 aa).

The 56-residue stretch at 18-73 (WTREDDKAFENALAACAAPPPADGGAPDDDWFAALAASVPGARSAEEVRRHYEALV) folds into the Myb-like domain. A Nuclear export signal 1 motif is present at residues 72–86 (LVEDVAAIDAGRVPL). Positions 89–142 (YAGEESAAPPDGAGAAAAASKDGGHRRDERKGGGGGYDGGKSCSKAEQERRKGI) are disordered. Positions 92-109 (EESAAPPDGAGAAAAASK) are enriched in low complexity. Basic and acidic residues-rich tracts occupy residues 110-120 (DGGHRRDERKG) and 132-142 (SKAEQERRKGI). The short motif at 133–140 (KAEQERRK) is the Nuclear localization signal 1 element. The HTH myb-type domain occupies 136 to 192 (QERRKGIPWTEEEHRLFLLGLDKFGKGDWRSISRNFVISRTPTQVASHAQKYFIRLN). Residues 164-188 (WRSISRNFVISRTPTQVASHAQKYF) constitute a DNA-binding region (H-T-H motif). The Nuclear localization signal 2 motif lies at 196–200 (RDRRR). A Nuclear export signal 2 motif is present at residues 203 to 215 (IHDITSVTAGDQV). A compositionally biased stretch (low complexity) spans 228 to 241 (ATGNPAAAALGPPG). A disordered region spans residues 228-255 (ATGNPAAAALGPPGMKHHHHHHPGGAPP).

In terms of assembly, homodimer. Interacts with GAMYB. Expressed in aboveground tissues, with the highest level in leaves.

It is found in the nucleus. The protein resides in the cytoplasm. Functionally, transcription activator that binds to 5'-TATCCA-3' elements in gene promoters. Derepresses strongly the sugar-repressed transcription of promoters containing SRS or 5'-TATCCA-3' elements. Functions with GAMYB to integrate diverse nutrient starvation and gibberellin (GA) signaling pathways during germination of grains. Sugar, nitrogen and phosphate starvation signals converge and interconnect with GA to promote the co-nuclear import of MYBS1 and GAMYB, resulting in the expression of a large set of GA-inducible hydrolases, transporters, and regulators that are essential for mobilization of nutrient reserves in the endosperm to support seedling growth. The chain is Transcription factor MYBS1 from Oryza sativa subsp. japonica (Rice).